Consider the following 373-residue polypeptide: Protein RETARDED ROOT GROWTH, mitochondrial (373 aa).

A mitochondrion-targeting transit peptide spans 1–49 (MGKWRAVAALLLRNQLLNSSKRLNLSSSPCVSKHPTIGLASRFLNFRHF). The chain crosses the membrane as a helical span at residues 346 to 362 (EWCIIFLLAIENAIGIY).

It belongs to the RMD1/sif2 family. As to expression, predominantly expressed in the root meristem, in the primary and lateral root tips. Also present in leaves and pollen.

The protein localises to the mitochondrion membrane. Its subcellular location is the mitochondrion. Its function is as follows. Required for the maintenance of mitochondrial structure. Positive regulator of cell division and endoreduplication but negative regulator of cell expansion in the postembryonic root meristem, thus leading to the promotion of root growth. The sequence is that of Protein RETARDED ROOT GROWTH, mitochondrial from Arabidopsis thaliana (Mouse-ear cress).